An 80-amino-acid polypeptide reads, in one-letter code: Cell division protein ZapB (80 aa).

The stretch at 3–80 (LEILEQLEAK…GLLGKMDEVE (78 aa)) forms a coiled coil. Positions 41–60 (LEQANNGRSEVEQEAQRARD) are disordered. Basic and acidic residues predominate over residues 49-60 (SEVEQEAQRARD).

It belongs to the ZapB family. As to quaternary structure, homodimer. The ends of the coiled-coil dimer bind to each other, forming polymers. Interacts with FtsZ.

It is found in the cytoplasm. Functionally, non-essential, abundant cell division factor that is required for proper Z-ring formation. It is recruited early to the divisome by direct interaction with FtsZ, stimulating Z-ring assembly and thereby promoting cell division earlier in the cell cycle. Its recruitment to the Z-ring requires functional FtsA or ZipA. This is Cell division protein ZapB from Aliivibrio fischeri (strain ATCC 700601 / ES114) (Vibrio fischeri).